We begin with the raw amino-acid sequence, 278 residues long: Phosphatidylglycerol--prolipoprotein diacylglyceryl transferase (278 aa).

A run of 4 helical transmembrane segments spans residues 18 to 38, 55 to 75, 90 to 110, and 115 to 135; these read IQVHWYGIIIASAVVLATILA, LILWALPVAIITARMYYVIFE, WDGGIAIYGALIGAGIVVYLF, and WIPVWLMLDIIAPVLIMAQGI. Arginine 137 contacts a 1,2-diacyl-sn-glycero-3-phospho-(1'-sn-glycerol). 3 consecutive transmembrane segments (helical) span residues 177 to 197, 207 to 227, and 237 to 257; these read QPTFLYESLWDILGFIVLMSL, GEVFLSYVIWYAFGRFFVEGM, and IRVSQWLSVILFIGAIGILVF.

This sequence belongs to the Lgt family.

Its subcellular location is the cell membrane. It catalyses the reaction L-cysteinyl-[prolipoprotein] + a 1,2-diacyl-sn-glycero-3-phospho-(1'-sn-glycerol) = an S-1,2-diacyl-sn-glyceryl-L-cysteinyl-[prolipoprotein] + sn-glycerol 1-phosphate + H(+). It functions in the pathway protein modification; lipoprotein biosynthesis (diacylglyceryl transfer). Catalyzes the transfer of the diacylglyceryl group from phosphatidylglycerol to the sulfhydryl group of the N-terminal cysteine of a prolipoprotein, the first step in the formation of mature lipoproteins. In Pediococcus pentosaceus (strain ATCC 25745 / CCUG 21536 / LMG 10740 / 183-1w), this protein is Phosphatidylglycerol--prolipoprotein diacylglyceryl transferase.